The following is a 341-amino-acid chain: Trimethylamine N-oxide transport system ATP-binding protein TmoW (341 aa).

Positions 6–265 constitute an ABC transporter domain; the sequence is IKCESVYKIF…PATEYVRKFT (260 aa). 61–68 is a binding site for ATP; the sequence is GLSGSGKS.

Belongs to the ABC transporter superfamily. In terms of assembly, the complex is probably composed of two ATP-binding proteins (TmoW), two transmembrane proteins (TmoV) and a solute-binding protein (TmoX).

The protein localises to the cell inner membrane. The catalysed reaction is a quaternary ammonium(out) + ATP + H2O = a quaternary ammonium(in) + ADP + phosphate + H(+). Functionally, part of the ABC transporter complex TmoXWV involved in trimethylamine N-oxide (TMAO) import. Responsible for energy coupling to the transport system. The chain is Trimethylamine N-oxide transport system ATP-binding protein TmoW from Pelagibacter ubique (strain HTCC1062).